We begin with the raw amino-acid sequence, 290 residues long: Agmatinase (290 aa).

The Mn(2+) site is built by His112, Asp135, His137, Asp139, Asp216, and Asp218.

It belongs to the arginase family. Agmatinase subfamily. It depends on Mn(2+) as a cofactor.

The catalysed reaction is agmatine + H2O = urea + putrescine. Its pathway is amine and polyamine biosynthesis; putrescine biosynthesis via agmatine pathway; putrescine from agmatine: step 1/1. Functionally, catalyzes the formation of putrescine from agmatine. In Bacillus cereus (strain ATCC 14579 / DSM 31 / CCUG 7414 / JCM 2152 / NBRC 15305 / NCIMB 9373 / NCTC 2599 / NRRL B-3711), this protein is Agmatinase (speB).